Reading from the N-terminus, the 161-residue chain is Allophycocyanin beta chain (161 aa).

Residue asparagine 71 is modified to N4-methylasparagine. Residue cysteine 81 participates in (2R,3E)-phycocyanobilin binding.

It belongs to the phycobiliprotein family. In terms of assembly, heterodimer of an alpha and a beta chain. Post-translationally, contains one covalently linked phycocyanobilin chromophore.

It localises to the cellular thylakoid membrane. Its function is as follows. Light-harvesting photosynthetic bile pigment-protein from the phycobiliprotein complex. Allophycocyanin has a maximum absorption at approximately 650 nanometers. The sequence is that of Allophycocyanin beta chain (apcB) from Synechocystis sp. (strain ATCC 27184 / PCC 6803 / Kazusa).